The primary structure comprises 263 residues: Small ribosomal subunit protein eS4 (263 aa).

In terms of domain architecture, S4 RNA-binding spans 42-104 (LPLIVFLRNR…TGEHFRLVYD (63 aa)).

This sequence belongs to the eukaryotic ribosomal protein eS4 family.

The sequence is that of Small ribosomal subunit protein eS4 (RPS4Y1) from Gorilla gorilla gorilla (Western lowland gorilla).